Here is a 304-residue protein sequence, read N- to C-terminus: Dihydroorotate dehydrogenase B (NAD(+)), catalytic subunit (304 aa).

Residues S21 and 45–46 (KA) contribute to the FMN site. Residues K45 and 69 to 73 (NAIGL) each bind substrate. The FMN site is built by N99 and N127. Position 127 (N127) interacts with substrate. C130 functions as the Nucleophile in the catalytic mechanism. FMN contacts are provided by K165 and I191. Residue 192 to 193 (NT) coordinates substrate. FMN contacts are provided by residues G217, 243–244 (GG), and 265–266 (GT).

Belongs to the dihydroorotate dehydrogenase family. Type 1 subfamily. Heterotetramer of 2 PyrK and 2 PyrD type B subunits. FMN is required as a cofactor.

The protein localises to the cytoplasm. The enzyme catalyses (S)-dihydroorotate + NAD(+) = orotate + NADH + H(+). It participates in pyrimidine metabolism; UMP biosynthesis via de novo pathway; orotate from (S)-dihydroorotate (NAD(+) route): step 1/1. Catalyzes the conversion of dihydroorotate to orotate with NAD(+) as electron acceptor. The polypeptide is Dihydroorotate dehydrogenase B (NAD(+)), catalytic subunit (pyrD) (Shouchella clausii (strain KSM-K16) (Alkalihalobacillus clausii)).